The chain runs to 146 residues: Universal stress protein A homolog 2 (146 aa).

Belongs to the universal stress protein A family. As to quaternary structure, homodimer.

The protein resides in the cytoplasm. Involved in stress response. The chain is Universal stress protein A homolog 2 (uspA2) from Coxiella burnetii (strain RSA 493 / Nine Mile phase I).